A 603-amino-acid chain; its full sequence is MGRKSAILAVILAIIYFRSNFSKMSNTPVQETEGPVYVAYSMEDMLKSPRDLYKSVKEVAKFVNSAEGKSMSARFKKFGTPREAMDFLAYGDAPTTPKTVPPVAPTEPNSPFSGVNRIQMNEFKKYVEKGDMENFLRLVDSNPRFLVNTGGDVASIVMEGFRYNALHIAAKAGQTEIIAKILELIQNIDFLIRLYGTGADDVTLRKINILDSYLNTPDKGNSDTPLHFASKFGKIGVVRVLTENSATDRTLLNKSGKSALDCAGERYTGEDKDMVQRDIHLAIEGFYVFLHRNPTTGSTQLTVSQKPPATYSTSPTTATVTVSAQAGPFFTEREARDFAKSWQTAGKELKRTDFDKGWERVGRVLAEQSEAMWRETWHFLGSMELLDLGSEQGLGVLEAFLREKRRGNLRNSEISEISTKKSIFRRGIHARKLDFGILDGEKSAEISENLTPDGSDSADDEDDDDIFYDTFSEIPAAAEKSINDPDDTLGSLTDRFAAISIFSPLPPPPPPQWSNSPNFDYSEGEDSFATPPTTPPPTFVADDEPCKIDNDLFEVLAQISSELISKFPLTQDYVQKLGKLTAHDRSTWRPIDSPARCDSRRKI.

Residues 2 to 22 (GRKSAILAVILAIIYFRSNFS) traverse the membrane as a helical; Signal-anchor for type III membrane protein segment. ANK repeat units follow at residues 161–190 (FRYN…NIDF) and 221–250 (NSDT…TDRT). Disordered stretches follow at residues 446–465 (ISEN…DDDD) and 505–538 (LPPP…PPPT). Positions 456 to 465 (DSADDEDDDD) are enriched in acidic residues.

Belongs to the ANKLE2 family. Interacts with baf-1. Interacts with protein phosphatase 2A (PP2A) components.

It is found in the nucleus membrane. Its function is as follows. Involved in mitotic nuclear envelope reassembly by promoting dephosphorylation of baf-1 during mitotic exit. Coordinates the control of baf-1 dephosphorylation by inhibiting VRK1 kinase and promoting dephosphorylation of baf-1 by protein phosphatase 2A (PP2A), thereby facilitating nuclear envelope assembly. It is unclear whether it acts as a real PP2A regulatory subunit or whether it is involved in recruitment of the PP2A complex. This chain is Ankyrin repeat and LEM domain-containing protein 2 homolog (lem-4), found in Caenorhabditis elegans.